The primary structure comprises 131 residues: Small ribosomal subunit protein bS6 (131 aa).

A disordered region spans residues 98 to 131 (EASPMVKAKDERRERREDFANETADDSEAGDSEE). A compositionally biased stretch (basic and acidic residues) spans 104-116 (KAKDERRERREDF). Acidic residues predominate over residues 120–131 (TADDSEAGDSEE).

Belongs to the bacterial ribosomal protein bS6 family.

Binds together with bS18 to 16S ribosomal RNA. The chain is Small ribosomal subunit protein bS6 from Klebsiella pneumoniae (strain 342).